We begin with the raw amino-acid sequence, 54 residues long: uncharacterized protein (54 aa).

Basic and acidic residues-rich tracts occupy residues 1 to 19 and 26 to 54; these read MTEK…HNDL and EELK…YDTK. The interval 1 to 54 is disordered; it reads MTEKKQQNKPNENPEHNDLTDPIPNEELKENMNDEKHKRQQRDNSQSERDYDTK.

This is an uncharacterized protein from Bacillus subtilis (strain 168).